The following is a 288-amino-acid chain: ATP synthase gamma chain (288 aa).

The protein belongs to the ATPase gamma chain family. F-type ATPases have 2 components, CF(1) - the catalytic core - and CF(0) - the membrane proton channel. CF(1) has five subunits: alpha(3), beta(3), gamma(1), delta(1), epsilon(1). CF(0) has three main subunits: a, b and c.

The protein localises to the cell inner membrane. Functionally, produces ATP from ADP in the presence of a proton gradient across the membrane. The gamma chain is believed to be important in regulating ATPase activity and the flow of protons through the CF(0) complex. The polypeptide is ATP synthase gamma chain (Acidovorax ebreus (strain TPSY) (Diaphorobacter sp. (strain TPSY))).